Consider the following 279-residue polypeptide: Tryptophan synthase alpha chain (279 aa).

Active-site proton acceptor residues include glutamate 50 and aspartate 61.

This sequence belongs to the TrpA family. Tetramer of two alpha and two beta chains.

It carries out the reaction (1S,2R)-1-C-(indol-3-yl)glycerol 3-phosphate + L-serine = D-glyceraldehyde 3-phosphate + L-tryptophan + H2O. Its pathway is amino-acid biosynthesis; L-tryptophan biosynthesis; L-tryptophan from chorismate: step 5/5. In terms of biological role, the alpha subunit is responsible for the aldol cleavage of indoleglycerol phosphate to indole and glyceraldehyde 3-phosphate. This is Tryptophan synthase alpha chain from Brucella abortus (strain S19).